The following is a 158-amino-acid chain: MNVIEGVVATPDARVAIAIARFNHFINDSLLQGAIDALKRIGQVKDENITVVWVPGAYELPLAVRALTKSAKNGGYDAVIALGTVIRGGTAHFEFVAGECSSGLSSVAMDSEIPVAFGVLTTESIEQAIERAGTKAGNKGAEAALTALEMINVLKAIK.

Residues F22, A57–E59, and T84–I86 contribute to the 5-amino-6-(D-ribitylamino)uracil site. (2S)-2-hydroxy-3-oxobutyl phosphate is bound at residue G89 to T90. Catalysis depends on H92, which acts as the Proton donor. F117 is a 5-amino-6-(D-ribitylamino)uracil binding site. Residue R131 participates in (2S)-2-hydroxy-3-oxobutyl phosphate binding.

This sequence belongs to the DMRL synthase family. As to quaternary structure, forms an icosahedral capsid composed of 60 subunits, arranged as a dodecamer of pentamers.

The enzyme catalyses (2S)-2-hydroxy-3-oxobutyl phosphate + 5-amino-6-(D-ribitylamino)uracil = 6,7-dimethyl-8-(1-D-ribityl)lumazine + phosphate + 2 H2O + H(+). It functions in the pathway cofactor biosynthesis; riboflavin biosynthesis; riboflavin from 2-hydroxy-3-oxobutyl phosphate and 5-amino-6-(D-ribitylamino)uracil: step 1/2. Catalyzes the formation of 6,7-dimethyl-8-ribityllumazine by condensation of 5-amino-6-(D-ribitylamino)uracil with 3,4-dihydroxy-2-butanone 4-phosphate. This is the penultimate step in the biosynthesis of riboflavin. The sequence is that of 6,7-dimethyl-8-ribityllumazine synthase from Pectobacterium atrosepticum (strain SCRI 1043 / ATCC BAA-672) (Erwinia carotovora subsp. atroseptica).